Consider the following 887-residue polypeptide: MSSDMAADESEAPVLSEDEVWEFCLDKTEDGGGSPGSDVTDTCEPPCGCWELNPNSLEEEHVLFTADPYLELHNDDTRVVRVKVIAGIGLAKKDILGASDPYVRVTLYDPMSGILTSVQTKTIKKSLNPKWNEEILFRVLPQRHRILFEVFDENRLTRDDFLGQVDVPLYPLPTENPRMERPYTFKDFVLHPRSHKSRVKGYLRLKMTYLPKNGSEDENADQAEELEPGWVVLDQPDAATHLPHPPEPSPLPPGWEERQDVLGRTYYVNHESRRTQWKRPSPDDDLTDEDNDDMQLQAQRAFTTRRQISEDVDGPDNRESPENWEIVREDENTEYSGQAVQSPPSGHIDVQTHLAEEFNTRLAVCGNPATSQPVTSSNHSSRGGSLQTCIFEEQPTLPVLLPTSSGLPPGWEEKQDDRGRSYYVDHNSKTTTWSKPTMQDDPRSKIPAHLRGKTDSNDLGPLPPGWEERTHTDGRVFFINHNIKKTQWEDPRLQNVAITGPAVPYSRDYKRKYEFFRRKLKKQTDIPNKFEMKLRRANILEDSYRRIMGVKRADLLKARLWIEFDGEKGLDYGGVAREWFFLISKEMFNPYYGLFEYSATDNYTLQINPNSGLCNEDHLSYFKFIGRVAGMAVYHGKLLDGFFIRPFYKMMLQKLITLHDMESVDSEYYSSLRWILENDPTELDLRFIIDEELFGQTHQHELKTGGSEIVVTNKNKKEYIYLVIQWRFVNRIQKQMAAFKEGFFELIPQDLIKIFDENELELLMCGLGDVDVNDWREHTKYKNGYSMNHQVIHWFWKAVWMMDSEKRIRLLQFVTGTSRVPMNGFAELYGSNGPQSFTVEQWGTPDKLPRAHTCFNRLDLPPYESFDELWDKLQMAIENTQGFDGVD.

The C2 domain maps to Glu58–Tyr183. Phosphoserine is present on Ser215. A mediates interaction with TNIK region spans residues Asp217–Gly549. Disordered stretches follow at residues Pro236–Glu257, Glu271–Asp290, and Phe302–Glu322. Over residues Pro243 to Pro253 the composition is skewed to pro residues. Positions Ser249–Pro282 constitute a WW 1 domain. Thr287 bears the Phosphothreonine mark. Ser309 is subject to Phosphoserine. Positions Leu354–Val364 match the Nuclear export signal motif. Phosphoserine occurs at positions 380 and 385. 2 consecutive WW domains span residues Ser405–Met438 and Gly460–Leu493. The HECT domain maps to Arg552–Asp887. Lys847 participates in a covalent cross-link: Glycyl lysine isopeptide (Lys-Gly) (interchain with G-Cter in ubiquitin). The active-site Glycyl thioester intermediate is Cys854.

As to quaternary structure, interacts with NDFIP1 and NDFIP2; this interaction activates the E3 ubiquitin-protein ligase and may induce its recruitment to exosomes. Interacts with UBE2D2. Binds, in vitro, through the WW2 and WW3 domains, to neural isoforms of ENAH that contain the PPSY motif. Interacts with BEAN1, LITAF, RNF11, WBP1, WBP2, PMEPAI and PRRG2. Interacts with murine leukemia virus Gag polyprotein (via PPXY motif). Interacts (via C2 domain) with GRB10 (via SH2 domain). Interacts with ERBB4. Interacts with TNIK; the interaction is direct, allows the TNIK-dependent recruitment of RAP2A and its ubiquitination by NEDD4. Interacts (via WW3 domain) with TNK2; EGF promotes this interaction. Interacts (via WW3 domain) with FGFR1 (via C-terminus). Interacts with OTUD7B. Interacts with ISG15. Interacts (via WW domain) with RAPGEF2; this interaction leads to ubiquitination and degradation via the proteasome pathway. Interacts (via WW domains) with ARRDC3 (via PPXY motifs). Interacts with LAPTM4B; may play a role in the lysosomal sorting of LAPTM4B. Interacts with ZBTB7B. Interacts with PRRG4 (via cytoplasmic domain). Interacts directly with LDLRAD3; this interaction promotes NEDD4 auto-ubiquitination. Interacts with ADRB2. Interacts (via WW domains) with DAZAP2 (via PPAY motif). Undergoes 'Lys-29'-linked auto-ubiquitination at Lys-847 and serves as a scaffold for recruiting USP13 to form an NEDD4-USP13 deubiquitination complex. In terms of tissue distribution, brain.

The protein resides in the cytoplasm. The protein localises to the nucleus. It is found in the cell membrane. It carries out the reaction S-ubiquitinyl-[E2 ubiquitin-conjugating enzyme]-L-cysteine + [acceptor protein]-L-lysine = [E2 ubiquitin-conjugating enzyme]-L-cysteine + N(6)-ubiquitinyl-[acceptor protein]-L-lysine.. It participates in protein modification; protein ubiquitination. Activated by NDFIP1- and NDFIP2-binding. Its function is as follows. E3 ubiquitin-protein ligase which accepts ubiquitin from an E2 ubiquitin-conjugating enzyme in the form of a thioester and then directly transfers the ubiquitin to targeted substrates. Specifically ubiquitinates 'Lys-63' in target proteins. Monoubiquitinates IGF1R at multiple sites, thus leading to receptor internalization and degradation in lysosomes. Ubiquitinates FGFR1, leading to receptor internalization and degradation in lysosomes. Involved in ubiquitination of ERBB4 intracellular domain E4ICD1. Predominantly involved in ubiquitination of membrane bound forms of ERBB4 rather than processed precursors and intermediate membrane-anchored 80 kDa fragments (m80HER4), with a lesser role in ubiquitination of ERBB4 intracellular domain E4ICD1. Promotes ubiquitination of RAPGEF2. Involved in the pathway leading to the degradation of VEGFR-2/KDFR, independently of its ubiquitin-ligase activity. Part of a signaling complex composed of NEDD4, RAP2A and TNIK which regulates neuronal dendrite extension and arborization during development. Ubiquitinates TNK2 and regulates EGF-induced degradation of EGFR and TNF2. Ubiquitinates BRAT1 and this ubiquitination is enhanced in the presence of NDFIP1. Ubiquitinates DAZAP2, leading to its proteasomal degradation. Ubiquitinates POLR2A. Functions as a platform to recruit USP13 to form an NEDD4-USP13 deubiquitination complex that plays a critical role in cleaving the 'Lys-48'-linked ubiquitin chains of VPS34 and then stabilizing VPS34, thus promoting the formation of autophagosomes. This is E3 ubiquitin-protein ligase NEDD4 (Nedd4) from Mus musculus (Mouse).